A 177-amino-acid polypeptide reads, in one-letter code: VQ motif-containing protein 11 (177 aa).

Positions 25 to 34 (FRNIVQKLTG) match the VQ motif. A phosphoserine mark is found at Ser43, Ser99, Ser115, Ser142, and Ser145. Positions 115–133 (SAREEHHAQPDKEEQKAIA) are enriched in basic and acidic residues. Residues 115–177 (SAREEHHAQP…RIHEDNHRDS (63 aa)) are disordered. The segment covering 148 to 159 (EPAPELLPLFPL) has biased composition (low complexity). Position 161 is a phosphoserine (Ser161). Positions 168–177 (RIHEDNHRDS) are enriched in basic and acidic residues.

Phosphorylated on serine residues by MPK6.

The protein resides in the nucleus. Its function is as follows. May modulate WRKY transcription factor activities. This chain is VQ motif-containing protein 11, found in Arabidopsis thaliana (Mouse-ear cress).